Here is an 86-residue protein sequence, read N- to C-terminus: Large ribosomal subunit protein bL27 (86 aa).

The segment covering 1–10 has biased composition (gly residues); the sequence is MAQKKGGGST. The tract at residues 1-20 is disordered; sequence MAQKKGGGSTRNGRDSESKR.

Belongs to the bacterial ribosomal protein bL27 family.

The polypeptide is Large ribosomal subunit protein bL27 (Polynucleobacter necessarius subsp. necessarius (strain STIR1)).